The following is a 666-amino-acid chain: UvrABC system protein B (666 aa).

The region spanning N25 to R412 is the Helicase ATP-binding domain. ATP is bound at residue G38–T45. The Beta-hairpin motif lies at Y91–I114. A Helicase C-terminal domain is found at Q429–I595. The UVR domain maps to D622–K657.

Belongs to the UvrB family. Forms a heterotetramer with UvrA during the search for lesions. Interacts with UvrC in an incision complex.

It localises to the cytoplasm. Its function is as follows. The UvrABC repair system catalyzes the recognition and processing of DNA lesions. A damage recognition complex composed of 2 UvrA and 2 UvrB subunits scans DNA for abnormalities. Upon binding of the UvrA(2)B(2) complex to a putative damaged site, the DNA wraps around one UvrB monomer. DNA wrap is dependent on ATP binding by UvrB and probably causes local melting of the DNA helix, facilitating insertion of UvrB beta-hairpin between the DNA strands. Then UvrB probes one DNA strand for the presence of a lesion. If a lesion is found the UvrA subunits dissociate and the UvrB-DNA preincision complex is formed. This complex is subsequently bound by UvrC and the second UvrB is released. If no lesion is found, the DNA wraps around the other UvrB subunit that will check the other stand for damage. This Clostridium acetobutylicum (strain ATCC 824 / DSM 792 / JCM 1419 / IAM 19013 / LMG 5710 / NBRC 13948 / NRRL B-527 / VKM B-1787 / 2291 / W) protein is UvrABC system protein B.